The primary structure comprises 755 residues: 3-isopropylmalate dehydratase (755 aa).

Residues C353, C413, and C416 each coordinate [4Fe-4S] cluster. 3 disordered regions span residues 427–446 (GERC…GAGG), 471–493 (LTPA…ELEP), and 510–529 (DAPA…AAGM). Residues 510 to 528 (DAPATGASPPSPAPSDAAG) are compositionally biased toward low complexity.

Belongs to the aconitase/IPM isomerase family. As to quaternary structure, monomer. [4Fe-4S] cluster is required as a cofactor.

It carries out the reaction (2R,3S)-3-isopropylmalate = (2S)-2-isopropylmalate. It functions in the pathway amino-acid biosynthesis; L-leucine biosynthesis; L-leucine from 3-methyl-2-oxobutanoate: step 2/4. Its function is as follows. Catalyzes the isomerization between 2-isopropylmalate and 3-isopropylmalate, via the formation of 2-isopropylmaleate. In Rhizomucor pusillus, this protein is 3-isopropylmalate dehydratase (LEUA).